The following is a 296-amino-acid chain: Probable alpha-L-glutamate ligase (296 aa).

The 184-residue stretch at 104–287 (LQLLARQGID…IATLMITFIE (184 aa)) folds into the ATP-grasp domain. Residues Lys141, 178 to 179 (EF), Asp187, and 211 to 213 (RSN) contribute to the ATP site. Asp248, Glu260, and Asn262 together coordinate Mg(2+). Mn(2+)-binding residues include Asp248, Glu260, and Asn262.

Belongs to the RimK family. Mg(2+) is required as a cofactor. Mn(2+) serves as cofactor.

The protein is Probable alpha-L-glutamate ligase of Sodalis glossinidius (strain morsitans).